Reading from the N-terminus, the 447-residue chain is N-succinylarginine dihydrolase (447 aa).

Residues Ala19–Ser28, Asn110, and His137–Arg138 each bind substrate. Glu174 is a catalytic residue. Arg212 provides a ligand contact to substrate. His248 is an active-site residue. 2 residues coordinate substrate: Asp250 and Asn359. Cys365 functions as the Nucleophile in the catalytic mechanism.

This sequence belongs to the succinylarginine dihydrolase family. As to quaternary structure, homodimer.

The enzyme catalyses N(2)-succinyl-L-arginine + 2 H2O + 2 H(+) = N(2)-succinyl-L-ornithine + 2 NH4(+) + CO2. It participates in amino-acid degradation; L-arginine degradation via AST pathway; L-glutamate and succinate from L-arginine: step 2/5. Catalyzes the hydrolysis of N(2)-succinylarginine into N(2)-succinylornithine, ammonia and CO(2). In Citrobacter koseri (strain ATCC BAA-895 / CDC 4225-83 / SGSC4696), this protein is N-succinylarginine dihydrolase.